The sequence spans 376 residues: 3-dehydroquinate synthase (376 aa).

Residues 115–119, 139–140, K152, and K161 each bind NAD(+); these read GVIGD and TS. The Zn(2+) site is built by E194, H256, and H275.

It belongs to the sugar phosphate cyclases superfamily. Dehydroquinate synthase family. Co(2+) is required as a cofactor. Zn(2+) serves as cofactor. The cofactor is NAD(+).

It localises to the cytoplasm. The catalysed reaction is 7-phospho-2-dehydro-3-deoxy-D-arabino-heptonate = 3-dehydroquinate + phosphate. It functions in the pathway metabolic intermediate biosynthesis; chorismate biosynthesis; chorismate from D-erythrose 4-phosphate and phosphoenolpyruvate: step 2/7. Catalyzes the conversion of 3-deoxy-D-arabino-heptulosonate 7-phosphate (DAHP) to dehydroquinate (DHQ). The chain is 3-dehydroquinate synthase from Rhizobium etli (strain CIAT 652).